The following is a 545-amino-acid chain: Ribulokinase (545 aa).

It belongs to the ribulokinase family.

It catalyses the reaction D-ribulose + ATP = D-ribulose 5-phosphate + ADP + H(+). It carries out the reaction L-ribulose + ATP = L-ribulose 5-phosphate + ADP + H(+). It participates in carbohydrate degradation; L-arabinose degradation via L-ribulose; D-xylulose 5-phosphate from L-arabinose (bacterial route): step 2/3. The sequence is that of Ribulokinase from Staphylococcus aureus (strain bovine RF122 / ET3-1).